The following is a 982-amino-acid chain: Glutamate [NMDA] receptor subunit 1 (982 aa).

The first 16 residues, 1–16 (MAFAVWFLSTFVIVAA), serve as a signal peptide directing secretion. The Extracellular segment spans residues 17–561 (QRHMALEHEG…TLVSFLQPFS (545 aa)). Asn247, Asn303, Asn334, Asn386, Asn443, Asn470, and Asn490 each carry an N-linked (GlcNAc...) asparagine glycan. Glycine-binding positions include 518–520 (PLT) and Arg525. Residues 562-582 (NTLWILVMVSVHVVALVLYLL) form a helical membrane-spanning segment. The Cytoplasmic portion of the chain corresponds to 583 to 639 (DRFSPFGRFKLSHSDSNEEKALNLSSAVWFAWGVLLNSGIGEGTPRSFSARVLGMVW). A helical membrane pass occupies residues 640 to 660 (AGFAMIIVASYTANLAAFLVL). Topologically, residues 661–819 (ERPKTKLSGI…KTPNTLGLKN (159 aa)) are extracellular. A glycan (N-linked (GlcNAc...) asparagine) is linked at Asn681. Glycine is bound by residues Ser691 and Asp735. A helical transmembrane segment spans residues 820–840 (MAGVFILVGVGIAGGVGLIII). The Cytoplasmic segment spans residues 841–982 (EVIYKKHQVK…YTSDVSHLVV (142 aa)). The segment at 934–982 (EIGKPGQSPKVIGGPPHPMLGKTRPQAQQNLLPPRYSPGYTSDVSHLVV) is disordered. The segment covering 972-982 (GYTSDVSHLVV) has biased composition (polar residues).

The protein belongs to the glutamate-gated ion channel (TC 1.A.10.1) family. As to quaternary structure, forms a heteromeric NMDA channel with Nmdar2.

It localises to the cell membrane. The protein localises to the postsynaptic cell membrane. It is found in the postsynaptic density. NMDA receptor subtype of glutamate-gated ion channels with high calcium permeability and voltage-dependent sensitivity to magnesium. Mediated by glycine. This protein plays a key role in synaptic plasticity, synaptogenesis, excitotoxicity, memory acquisition and learning. It mediates neuronal functions in glutamate neurotransmission. Is involved in the cell surface targeting of NMDA receptors. Plays a role in associative learning and in long-term memory consolidation. This chain is Glutamate [NMDA] receptor subunit 1, found in Drosophila willistoni (Fruit fly).